We begin with the raw amino-acid sequence, 252 residues long: Coenzyme F420:L-glutamate ligase (252 aa).

GTP is bound by residues 12–15 (VPLE), 44–45 (HT), and Lys-49. Asp-114 contacts a divalent metal cation. Asn-117 contributes to the GTP binding site. 3 residues coordinate a divalent metal cation: Asp-155, Thr-156, and Gln-213. 211–218 (MGQADEGT) contributes to the GTP binding site.

The protein belongs to the CofE family. In terms of assembly, homodimer. Mg(2+) serves as cofactor. Mn(2+) is required as a cofactor. The cofactor is K(+).

It catalyses the reaction oxidized coenzyme F420-0 + GTP + L-glutamate = oxidized coenzyme F420-1 + GDP + phosphate + H(+). The catalysed reaction is oxidized coenzyme F420-1 + GTP + L-glutamate = oxidized coenzyme F420-2 + GDP + phosphate + H(+). The protein operates within cofactor biosynthesis; coenzyme F420 biosynthesis. Functionally, catalyzes the GTP-dependent successive addition of two or more gamma-linked L-glutamates to the L-lactyl phosphodiester of 7,8-didemethyl-8-hydroxy-5-deazariboflavin (F420-0) to form coenzyme F420-0-glutamyl-glutamate (F420-2) or polyglutamated F420 derivatives. The protein is Coenzyme F420:L-glutamate ligase of Methanopyrus kandleri (strain AV19 / DSM 6324 / JCM 9639 / NBRC 100938).